The chain runs to 1377 residues: DNA-directed RNA polymerase subunit beta (1377 aa).

It belongs to the RNA polymerase beta chain family. As to quaternary structure, the RNAP catalytic core consists of 2 alpha, 1 beta, 1 beta' and 1 omega subunit. When a sigma factor is associated with the core the holoenzyme is formed, which can initiate transcription.

The enzyme catalyses RNA(n) + a ribonucleoside 5'-triphosphate = RNA(n+1) + diphosphate. Functionally, DNA-dependent RNA polymerase catalyzes the transcription of DNA into RNA using the four ribonucleoside triphosphates as substrates. This is DNA-directed RNA polymerase subunit beta from Aromatoleum aromaticum (strain DSM 19018 / LMG 30748 / EbN1) (Azoarcus sp. (strain EbN1)).